Reading from the N-terminus, the 361-residue chain is Putative F-box protein At3g25460 (361 aa).

Residues 1 to 45 (MMMPELPEDLLVEILCRVPATSLKRLRSTCKLWNHLYNDKRFKSK) enclose the F-box domain.

This is Putative F-box protein At3g25460 from Arabidopsis thaliana (Mouse-ear cress).